Reading from the N-terminus, the 84-residue chain is NAD(P)H-quinone oxidoreductase subunit O (84 aa).

The protein belongs to the complex I NdhO subunit family. As to quaternary structure, NDH-1 can be composed of about 15 different subunits; different subcomplexes with different compositions have been identified which probably have different functions.

The protein localises to the cellular thylakoid membrane. The catalysed reaction is a plastoquinone + NADH + (n+1) H(+)(in) = a plastoquinol + NAD(+) + n H(+)(out). It catalyses the reaction a plastoquinone + NADPH + (n+1) H(+)(in) = a plastoquinol + NADP(+) + n H(+)(out). Functionally, NDH-1 shuttles electrons from an unknown electron donor, via FMN and iron-sulfur (Fe-S) centers, to quinones in the respiratory and/or the photosynthetic chain. The immediate electron acceptor for the enzyme in this species is believed to be plastoquinone. Couples the redox reaction to proton translocation, and thus conserves the redox energy in a proton gradient. Cyanobacterial NDH-1 also plays a role in inorganic carbon-concentration. The sequence is that of NAD(P)H-quinone oxidoreductase subunit O from Synechococcus sp. (strain CC9902).